The chain runs to 658 residues: Translation factor GUF1, mitochondrial (658 aa).

The tr-type G domain occupies 45-231; sequence ENYRNFSIVA…AVIDRIPPPT (187 aa). GTP contacts are provided by residues 54–61, 123–127, and 177–180; these read AHIDHGKS, DTPGH, and NKID.

The protein belongs to the TRAFAC class translation factor GTPase superfamily. Classic translation factor GTPase family. LepA subfamily.

Its subcellular location is the mitochondrion inner membrane. The enzyme catalyses GTP + H2O = GDP + phosphate + H(+). In terms of biological role, promotes mitochondrial protein synthesis. May act as a fidelity factor of the translation reaction, by catalyzing a one-codon backward translocation of tRNAs on improperly translocated ribosomes. Binds to mitochondrial ribosomes in a GTP-dependent manner. The chain is Translation factor GUF1, mitochondrial from Vanderwaltozyma polyspora (strain ATCC 22028 / DSM 70294 / BCRC 21397 / CBS 2163 / NBRC 10782 / NRRL Y-8283 / UCD 57-17) (Kluyveromyces polysporus).